The sequence spans 157 residues: SUMO-conjugating enzyme UBC9 (157 aa).

Residue Ser-2 is modified to N-acetylserine. In terms of domain architecture, UBC core spans 4-157; that stretch reads LCLQRLQEER…VLLQAKQYSK (154 aa). Cys-93 (glycyl thioester intermediate) is an active-site residue.

Belongs to the ubiquitin-conjugating enzyme family. Interacts with SIZ1.

It localises to the nucleus. The protein operates within protein modification; protein sumoylation. Its function is as follows. E2 ubiquitin-like--protein ligase mediating SUMO/Smt3 attachment to septins and PCNA. Seems to be involved in degradation of S- (CLB5) and M-phase cyclins (CLB2). The protein is SUMO-conjugating enzyme UBC9 (UBC9) of Saccharomyces cerevisiae (strain ATCC 204508 / S288c) (Baker's yeast).